Here is a 563-residue protein sequence, read N- to C-terminus: Arginine--tRNA ligase (563 aa).

The short motif at 137–147 (ANPTGLLHMGN) is the 'HIGH' region element.

The protein belongs to the class-I aminoacyl-tRNA synthetase family. As to quaternary structure, monomer.

The protein localises to the cytoplasm. The catalysed reaction is tRNA(Arg) + L-arginine + ATP = L-arginyl-tRNA(Arg) + AMP + diphosphate. This chain is Arginine--tRNA ligase, found in Desulforudis audaxviator (strain MP104C).